The sequence spans 836 residues: DNA-directed RNA polymerase subunit beta' (836 aa).

Zn(2+) is bound by residues Cys-71, Cys-73, Cys-90, and Cys-93. Mg(2+) contacts are provided by Asp-623, Asp-625, and Asp-627.

The protein belongs to the RNA polymerase beta' chain family. RpoC1 subfamily. In terms of assembly, in plastids the minimal PEP RNA polymerase catalytic core is composed of four subunits: alpha, beta, beta', and beta''. When a (nuclear-encoded) sigma factor is associated with the core the holoenzyme is formed, which can initiate transcription. Requires Mg(2+) as cofactor. The cofactor is Zn(2+).

It localises to the plastid. Its subcellular location is the chloroplast. It catalyses the reaction RNA(n) + a ribonucleoside 5'-triphosphate = RNA(n+1) + diphosphate. DNA-dependent RNA polymerase catalyzes the transcription of DNA into RNA using the four ribonucleoside triphosphates as substrates. The sequence is that of DNA-directed RNA polymerase subunit beta' (rpoC1) from Chlorella vulgaris (Green alga).